The sequence spans 316 residues: Aspartate carbamoyltransferase catalytic subunit (316 aa).

Arg-59 and Thr-60 together coordinate carbamoyl phosphate. Lys-88 contributes to the L-aspartate binding site. Carbamoyl phosphate-binding residues include Arg-109, His-137, and Gln-140. Residues Arg-170 and Arg-232 each contribute to the L-aspartate site. The carbamoyl phosphate site is built by Leu-269 and Pro-270.

This sequence belongs to the aspartate/ornithine carbamoyltransferase superfamily. ATCase family. Heterooligomer of catalytic and regulatory chains.

The enzyme catalyses carbamoyl phosphate + L-aspartate = N-carbamoyl-L-aspartate + phosphate + H(+). It functions in the pathway pyrimidine metabolism; UMP biosynthesis via de novo pathway; (S)-dihydroorotate from bicarbonate: step 2/3. In terms of biological role, catalyzes the condensation of carbamoyl phosphate and aspartate to form carbamoyl aspartate and inorganic phosphate, the committed step in the de novo pyrimidine nucleotide biosynthesis pathway. The chain is Aspartate carbamoyltransferase catalytic subunit from Methanobrevibacter smithii (strain ATCC 35061 / DSM 861 / OCM 144 / PS).